Consider the following 628-residue polypeptide: Carbon monoxide dehydrogenase 1 (628 aa).

Positions 44, 52, 53, 56, 61, and 75 each coordinate [4Fe-4S] cluster. [Ni-4Fe-5S] cluster is bound by residues histidine 266, cysteine 302, cysteine 340, cysteine 448, cysteine 478, and cysteine 519.

The protein belongs to the Ni-containing carbon monoxide dehydrogenase family. Homodimer. Requires [4Fe-4S] cluster as cofactor. The cofactor is [Ni-4Fe-5S] cluster.

The enzyme catalyses CO + 2 oxidized [2Fe-2S]-[ferredoxin] + H2O = 2 reduced [2Fe-2S]-[ferredoxin] + CO2 + 2 H(+). Its function is as follows. CODH oxidizes carbon monoxide coupled, via CooF, to the reduction of a hydrogen cation by a hydrogenase (possibly CooH). The sequence is that of Carbon monoxide dehydrogenase 1 (cooS1) from Methanosarcina acetivorans (strain ATCC 35395 / DSM 2834 / JCM 12185 / C2A).